Consider the following 110-residue polypeptide: Insulin (110 aa).

Residues 1-23 form the signal peptide; it reads MALWLQAFTLLVLLVLSSPGAQS. Intrachain disulfides connect C30–C96, C42–C109, and C95–C100. A propeptide spans 56–87 (c peptide); sequence DVDPLLGFLSPKSAQENEADEYPYKDQGDLKV.

The protein belongs to the insulin family. In terms of assembly, heterodimer of a B chain and an A chain linked by two disulfide bonds.

It is found in the secreted. Its function is as follows. Insulin decreases blood glucose concentration. It increases cell permeability to monosaccharides, amino acids and fatty acids. It accelerates glycolysis, the pentose phosphate cycle, and glycogen synthesis in liver. The sequence is that of Insulin (ins) from Pantodon buchholzi (Freshwater butterflyfish).